The primary structure comprises 414 residues: Serpin A3-6 (414 aa).

The signal sequence occupies residues 1–25 (MRTERVSPLLALGILVAGLCSRVHC). N-linked (GlcNAc...) asparagine glycosylation is found at asparagine 103, asparagine 183, asparagine 233, asparagine 267, and asparagine 321.

Belongs to the serpin family. In terms of assembly, homodimer.

The protein resides in the cytoplasmic vesicle. The protein localises to the secretory vesicle. It localises to the chromaffin granule. It is found in the secreted. Functionally, serine protease inhibitor. In Bos taurus (Bovine), this protein is Serpin A3-6.